Here is a 282-residue protein sequence, read N- to C-terminus: Protein canopy homolog 3 (282 aa).

Residues 1–33 form the signal peptide; that stretch reads MEPLPEPASGPRPRPHRLLLLSLLLLLLPLLPA. In terms of domain architecture, Saposin B-type spans 53 to 275; it reads SKCEVCKYVA…EGIQKASPLT (223 aa). Disulfide bonds link cysteine 55–cysteine 212, cysteine 58–cysteine 200, and cysteine 110–cysteine 172. N-linked (GlcNAc...) asparagine glycosylation is present at asparagine 159. Residues 159-185 adopt a coiled-coil conformation; sequence NETSAEVADLKKQCDVLVEEFEEVIED. A disordered region spans residues 221–282; sequence KGDTAALGGK…PLTHSPPDEL (62 aa). The span at 255-266 shows a compositional bias: acidic residues; sequence DLDGDPSPEEDE.

This sequence belongs to the canopy family. Interacts with HSP90B1; this interaction is disrupted in the presence of ATP. Interacts with TLR1, TLR2, TLR4 and TLR9.

It is found in the endoplasmic reticulum. In terms of biological role, toll-like receptor (TLR)-specific co-chaperone for HSP90B1. Required for proper TLR folding, except that of TLR3, and hence controls TLR exit from the endoplasmic reticulum. Consequently, required for both innate and adaptive immune responses. The polypeptide is Protein canopy homolog 3 (CNPY3) (Bos taurus (Bovine)).